The following is a 218-amino-acid chain: Glutathione S-transferase class-mu 26 kDa isozyme 51 (218 aa).

The 82-residue stretch at 2–83 (PAKLGYWKIR…YIADKHGMLG (82 aa)) folds into the GST N-terminal domain. Glutathione-binding positions include 7 to 8 (YW), 41 to 45 (WFGDK), 54 to 55 (NL), and 67 to 68 (QS). One can recognise a GST C-terminal domain in the interval 85–203 (TPEERARISM…ESEKFIKWPL (119 aa)). Tyr-111 is a binding site for substrate.

Belongs to the GST superfamily. Mu family. In terms of assembly, homodimer.

It is found in the cytoplasm. It catalyses the reaction RX + glutathione = an S-substituted glutathione + a halide anion + H(+). Its function is as follows. Conjugation of reduced glutathione to a wide number of exogenous and endogenous hydrophobic electrophiles. Functionally, GST isoenzymes appear to play a central role in the parasite detoxification system. Other functions are also suspected including a role in increasing the solubility of haematin in the parasite gut. The polypeptide is Glutathione S-transferase class-mu 26 kDa isozyme 51 (Fasciola hepatica (Liver fluke)).